A 357-amino-acid chain; its full sequence is Multiple sugar-binding periplasmic protein SbpA (357 aa).

An N-terminal signal peptide occupies residues 1 to 20; the sequence is MSSSFTTTLAGMAVGMLVLA.

This sequence belongs to the bacterial solute-binding protein 2 family.

Its subcellular location is the periplasm. In terms of biological role, mediates chemotaxis towards D-galactose, L-arabinose and D-fucose but not towards D-fructose. Probably part of a binding-protein high affinity uptake system. In Azospirillum brasilense, this protein is Multiple sugar-binding periplasmic protein SbpA (sbpA).